We begin with the raw amino-acid sequence, 454 residues long: Asparagine--tRNA ligase (454 aa).

This sequence belongs to the class-II aminoacyl-tRNA synthetase family. As to quaternary structure, homodimer.

It is found in the cytoplasm. It carries out the reaction tRNA(Asn) + L-asparagine + ATP = L-asparaginyl-tRNA(Asn) + AMP + diphosphate + H(+). The chain is Asparagine--tRNA ligase from Microcystis aeruginosa (strain NIES-843 / IAM M-2473).